Here is a 31-residue protein sequence, read N- to C-terminus: TRTPVNVTVTGAAGQIGYALLFRIASGHLLG.

11–17 (GAAGQIG) is a binding site for NAD(+).

It belongs to the LDH/MDH superfamily. MDH type 2 family.

It catalyses the reaction (S)-malate + NAD(+) = oxaloacetate + NADH + H(+). Its function is as follows. Catalyzes the reversible oxidation of malate to oxaloacetate. This chain is Malate dehydrogenase (mdh), found in Streptomyces atratus.